We begin with the raw amino-acid sequence, 416 residues long: MYYLKNTNFWMFGFFFFFYFFIMGAYFPFFPIWLHEVNHISKGDTGIIFACISLFSLLFQPIFGLLSDKLGLRKHLLWVITGMLVMFAPFFIYVFGPLLQVNILLGSIVGGIYLGFIYNAGAPAIEAYIEKASRRSNFEFGRARMFGCVGWALCASIAGIMFTINNQFVFWLGSGCAVILALLLLFSKTDVPSSAKVADAVGANNSAFSLKLALELFKQPKLWLISLYVVGVSCTYDVFDQQFANFFTSFFATGEQGTRVFGYVTTMGELLNASIMFFAPLIVNRIGGKNALLLAGTIMSVRIIGSHSHTALEVVILKTLHMFEIPFLIVGCFKYITSQFEVRFSATIYLVCFCFFKQLAMIFMSVLAGKMYESIGFQGAYLVLGIIRVSFTLISVFTLSGPGPFSLLRRRESVAL.

Residues 1–13 are Cytoplasmic-facing; sequence MYYLKNTNFWMFG. A helical transmembrane segment spans residues 14-34; that stretch reads FFFFFYFFIMGAYFPFFPIWL. Over 35 to 45 the chain is Periplasmic; it reads HEVNHISKGDT. Residues 46 to 66 form a helical membrane-spanning segment; it reads GIIFACISLFSLLFQPIFGLL. Residues 67–75 are Cytoplasmic-facing; sequence SDKLGLRKH. The chain crosses the membrane as a helical span at residues 76-96; it reads LLWVITGMLVMFAPFFIYVFG. Residue Pro97 is a topological domain, periplasmic. A helical membrane pass occupies residues 98–118; the sequence is LLQVNILLGSIVGGIYLGFIY. Residues 119 to 144 lie on the Cytoplasmic side of the membrane; that stretch reads NAGAPAIEAYIEKASRRSNFEFGRAR. A helical membrane pass occupies residues 145-165; sequence MFGCVGWALCASIAGIMFTIN. Residue Asn166 is a topological domain, periplasmic. The chain crosses the membrane as a helical span at residues 167-187; the sequence is QFVFWLGSGCAVILALLLLFS. Residues 188–211 lie on the Cytoplasmic side of the membrane; it reads KTDVPSSAKVADAVGANNSAFSLK. The chain crosses the membrane as a helical span at residues 212-232; the sequence is LALELFKQPKLWLISLYVVGV. Topologically, residues 233 to 262 are periplasmic; sequence SCTYDVFDQQFANFFTSFFATGEQGTRVFG. Residues 263 to 283 traverse the membrane as a helical segment; the sequence is YVTTMGELLNASIMFFAPLIV. The Cytoplasmic portion of the chain corresponds to 284–290; sequence NRIGGKN. Residues 291-309 form a helical membrane-spanning segment; the sequence is ALLLAGTIMSVRIIGSHSH. Residues 310–314 lie on the Periplasmic side of the membrane; sequence TALEV. Residues 315-336 traverse the membrane as a helical segment; it reads VILKTLHMFEIPFLIVGCFKYI. Over 337–347 the chain is Cytoplasmic; the sequence is TSQFEVRFSAT. Residues 348 to 368 traverse the membrane as a helical segment; the sequence is IYLVCFCFFKQLAMIFMSVLA. Topologically, residues 369 to 378 are periplasmic; that stretch reads GKMYESIGFQ. The chain crosses the membrane as a helical span at residues 379–399; sequence GAYLVLGIIRVSFTLISVFTL. At 400 to 416 the chain is on the cytoplasmic side; sequence SGPGPFSLLRRRESVAL.

Belongs to the major facilitator superfamily. Oligosaccharide:H(+) symporter (OHS) (TC 2.A.1.5) family.

The protein resides in the cell inner membrane. It carries out the reaction lactose(in) + H(+)(in) = lactose(out) + H(+)(out). Responsible for transport of beta-galactosides into the cell, with the concomitant import of a proton (symport system). The sequence is that of Lactose permease (lacY) from Citrobacter freundii.